A 291-amino-acid chain; its full sequence is Porphobilinogen deaminase (291 aa).

An S-(dipyrrolylmethanemethyl)cysteine modification is found at Cys-237.

Belongs to the HMBS family. As to quaternary structure, monomer. Dipyrromethane is required as a cofactor.

It catalyses the reaction 4 porphobilinogen + H2O = hydroxymethylbilane + 4 NH4(+). Its pathway is porphyrin-containing compound metabolism; protoporphyrin-IX biosynthesis; coproporphyrinogen-III from 5-aminolevulinate: step 2/4. Its function is as follows. Tetrapolymerization of the monopyrrole PBG into the hydroxymethylbilane pre-uroporphyrinogen in several discrete steps. This is Porphobilinogen deaminase from Clostridium acetobutylicum (strain ATCC 824 / DSM 792 / JCM 1419 / IAM 19013 / LMG 5710 / NBRC 13948 / NRRL B-527 / VKM B-1787 / 2291 / W).